Reading from the N-terminus, the 207-residue chain is Putative 3-methyladenine DNA glycosylase (207 aa).

This sequence belongs to the DNA glycosylase MPG family.

In Burkholderia orbicola (strain MC0-3), this protein is Putative 3-methyladenine DNA glycosylase.